The primary structure comprises 279 residues: Tryptophan 2,3-dioxygenase (279 aa).

Substrate is bound by residues 48-52 (FIIQH), tyrosine 110, and arginine 114. A heme-binding site is contributed by histidine 237. Threonine 251 contacts substrate.

It belongs to the tryptophan 2,3-dioxygenase family. As to quaternary structure, homotetramer. The cofactor is heme.

It catalyses the reaction L-tryptophan + O2 = N-formyl-L-kynurenine. Its pathway is amino-acid degradation; L-tryptophan degradation via kynurenine pathway; L-kynurenine from L-tryptophan: step 1/2. Functionally, heme-dependent dioxygenase that catalyzes the oxidative cleavage of the L-tryptophan (L-Trp) pyrrole ring and converts L-tryptophan to N-formyl-L-kynurenine. Catalyzes the oxidative cleavage of the indole moiety. The protein is Tryptophan 2,3-dioxygenase of Bradyrhizobium diazoefficiens (strain JCM 10833 / BCRC 13528 / IAM 13628 / NBRC 14792 / USDA 110).